A 151-amino-acid chain; its full sequence is Austinoid biosynthesis clusters protein F (151 aa).

It belongs to the trt14 isomerase family. Homodimer.

It participates in secondary metabolite biosynthesis; terpenoid biosynthesis. Its function is as follows. Part of the gene cluster B that mediates the biosynthesis of the fungal meroterpenoid acetoxydehydroaustin. The first step of the pathway is the synthesis of 3,5-dimethylorsellinic acid by the polyketide synthase ausA. 3,5-dimethylorsellinic acid is then prenylated by the polyprenyl transferase ausN. Further epoxidation by the FAD-dependent monooxygenase ausM and cyclization by the probable terpene cyclase ausL lead to the formation of protoaustinoid A. Protoaustinoid A is then oxidized to spiro-lactone preaustinoid A3 by the combined action of the FAD-binding monooxygenases ausB and ausC, and the dioxygenase ausE. Acid-catalyzed keto-rearrangement and ring contraction of the tetraketide portion of preaustinoid A3 by ausJ lead to the formation of preaustinoid A4. The aldo-keto reductase ausK, with the help of ausH, is involved in the next step by transforming preaustinoid A4 into isoaustinone which is in turn hydroxylated by the P450 monooxygenase ausI to form austinolide. The cytochrome P450 monooxygenase ausG then modifies austinolide to austinol. Austinol is further acetylated to austin by the O-acetyltransferase ausP, which spontaneously changes to dehydroaustin. The cytochrome P450 monooxygenase then converts dehydroaustin is into 7-dehydrodehydroaustin. The hydroxylation catalyzed by ausR permits the second O-acetyltransferase ausQ to add an additional acetyl group to the molecule, leading to the formation of acetoxydehydroaustin. Due to genetic rearrangements of the clusters and the subsequent loss of some enzymes, the end product of the Penicillium brasilianum austinoid biosynthesis clusters is acetoxydehydroaustin. In Penicillium brasilianum, this protein is Austinoid biosynthesis clusters protein F.